The chain runs to 550 residues: Probable endochitinase (550 aa).

A signal peptide spans 1–16 (MLHYLATILWLAVAHA). 2 N-linked (GlcNAc...) asparagine; by host glycosylation sites follow: Asn-146 and Asn-172. A GH18 domain is found at 147–547 (KTVAAYFVEW…NAMNERVRVK (401 aa)). Glu-304 serves as the catalytic Proton donor. Asn-344 is a glycosylation site (N-linked (GlcNAc...) asparagine; by host). Residues 547-550 (KDEL) carry the Prevents secretion from ER motif.

It belongs to the glycosyl hydrolase 18 family. Chitinase class II subfamily.

Its subcellular location is the host endoplasmic reticulum lumen. The enzyme catalyses Random endo-hydrolysis of N-acetyl-beta-D-glucosaminide (1-&gt;4)-beta-linkages in chitin and chitodextrins.. The chain is Probable endochitinase from Orgyia pseudotsugata (Douglas-fir tussock moth).